Reading from the N-terminus, the 190-residue chain is Small ribosomal subunit protein eS7 (190 aa).

This sequence belongs to the eukaryotic ribosomal protein eS7 family.

In Avicennia marina (Grey mangrove), this protein is Small ribosomal subunit protein eS7 (RPS7).